Reading from the N-terminus, the 199-residue chain is Thioredoxin reductase-like selenoprotein T (199 aa).

Residues 1–24 (MRAAGLGLGIGLLLLAALAGPGGS) form the signal peptide. The cysteinyl-selenocysteine (Cys-Sec) cross-link spans 50-53 (CVSU). A non-standard amino acid (selenocysteine) is located at residue U53. A helical membrane pass occupies residues 95–115 (VFKLVLIGLIIVGKDPFAFFG).

Belongs to the SelWTH family. Selenoprotein T subfamily. May contain a selenide-sulfide bond between Cys-50 and Sec-53. This bond is speculated to serve as redox-active pair.

It is found in the endoplasmic reticulum membrane. The catalysed reaction is [thioredoxin]-dithiol + NADP(+) = [thioredoxin]-disulfide + NADPH + H(+). Functionally, selenoprotein with thioredoxin reductase-like oxidoreductase activity. The chain is Thioredoxin reductase-like selenoprotein T from Gallus gallus (Chicken).